Consider the following 313-residue polypeptide: tRNA dimethylallyltransferase (313 aa).

11-18 contributes to the ATP binding site; that stretch reads GPTAAGKS. Position 13-18 (13-18) interacts with substrate; it reads TAAGKS. 3 interaction with substrate tRNA regions span residues 36-39, 160-164, and 244-249; these read DSAT, QRIQR, and RCVGYR.

The protein belongs to the IPP transferase family. As to quaternary structure, monomer. Mg(2+) is required as a cofactor.

It catalyses the reaction adenosine(37) in tRNA + dimethylallyl diphosphate = N(6)-dimethylallyladenosine(37) in tRNA + diphosphate. Its function is as follows. Catalyzes the transfer of a dimethylallyl group onto the adenine at position 37 in tRNAs that read codons beginning with uridine, leading to the formation of N6-(dimethylallyl)adenosine (i(6)A). The polypeptide is tRNA dimethylallyltransferase (Bordetella pertussis (strain Tohama I / ATCC BAA-589 / NCTC 13251)).